We begin with the raw amino-acid sequence, 957 residues long: Melanoma-associated antigen E1 (957 aa).

The segment at 1 to 433 (MSLVSQNSRR…RNPSKCSIVL (433 aa)) is disordered. Polar residues-rich tracts occupy residues 85–96 (SEASSASGQPTV) and 104–130 (LLAT…SVTL). The span at 138 to 156 (TSRPPTSSEEPSTSVPATP) shows a compositional bias: low complexity. Composition is skewed to polar residues over residues 158–177 (EGTS…TSVV), 220–232 (LSTS…TEGL), 256–306 (RSTT…GPST), 328–344 (LSTS…STSV), 364–380 (RSTS…DTSV), and 414–428 (TLFS…NPSK). 2 MAGE domains span residues 491–690 (MEQN…YNEA) and 745–936 (LESK…YREA). Positions 743 to 957 (SRLESKARKL…HRQFFVHNFR (215 aa)) are interaction with DTNA.

As to quaternary structure, interacts with DTNA. Interacts with TRIM28.

The protein resides in the cytoplasm. The protein localises to the perinuclear region. It is found in the nucleus. Its subcellular location is the cell membrane. May enhance ubiquitin ligase activity of RING-type zinc finger-containing E3 ubiquitin-protein ligases. Proposed to act through recruitment and/or stabilization of the Ubl-conjugating enzyme (E2) at the E3:substrate complex. The polypeptide is Melanoma-associated antigen E1 (MAGEE1) (Macaca fascicularis (Crab-eating macaque)).